The primary structure comprises 1237 residues: Structural protein VP1 (1237 aa).

Positions 1006–1222 constitute a PPPDE domain; it reads EPLRTLLFKL…ENDVRIAMIH (217 aa). Residues His1040 and Cys1192 contribute to the active site.

The protein resides in the virion. The protein is Structural protein VP1 of Rice ragged stunt virus (isolate Thailand) (RRSV).